A 295-amino-acid polypeptide reads, in one-letter code: Glutamyl-Q tRNA(Asp) synthetase (295 aa).

Residues 5-9 (RFAPS) and glutamate 41 contribute to the L-glutamate site. The short motif at 8 to 18 (PSPTGLLHIGS) is the 'HIGH' region element. Zn(2+) contacts are provided by cysteine 97, cysteine 99, tyrosine 117, and cysteine 121. 2 residues coordinate L-glutamate: tyrosine 178 and arginine 196. Positions 234-238 (KWSKQ) match the 'KMSKS' region motif. Lysine 237 serves as a coordination point for ATP.

It belongs to the class-I aminoacyl-tRNA synthetase family. GluQ subfamily. Requires Zn(2+) as cofactor.

Its function is as follows. Catalyzes the tRNA-independent activation of glutamate in presence of ATP and the subsequent transfer of glutamate onto a tRNA(Asp). Glutamate is transferred on the 2-amino-5-(4,5-dihydroxy-2-cyclopenten-1-yl) moiety of the queuosine in the wobble position of the QUC anticodon. This is Glutamyl-Q tRNA(Asp) synthetase from Neisseria meningitidis serogroup C (strain 053442).